Here is a 157-residue protein sequence, read N- to C-terminus: Transcriptional repressor NrdR (157 aa).

Residues 1-22 form a disordered region; the sequence is MKCPYCSSPDSRVINSRPSDDG. A zinc finger spans residues 3–34; it reads CPYCSSPDSRVINSRPSDDGASIRRRRECLTC. Positions 8–17 are enriched in polar residues; sequence SPDSRVINSR. The ATP-cone domain occupies 49 to 136; the sequence is LMVVKRSGVR…VYRDFDSLER (88 aa).

This sequence belongs to the NrdR family. Zn(2+) serves as cofactor.

Functionally, negatively regulates transcription of bacterial ribonucleotide reductase nrd genes and operons by binding to NrdR-boxes. In Deinococcus radiodurans (strain ATCC 13939 / DSM 20539 / JCM 16871 / CCUG 27074 / LMG 4051 / NBRC 15346 / NCIMB 9279 / VKM B-1422 / R1), this protein is Transcriptional repressor NrdR.